Consider the following 602-residue polypeptide: Potassium-transporting ATPase potassium-binding subunit (602 aa).

A run of 10 helical transmembrane segments spans residues 3-23 (ANNL…AVPV), 64-84 (QYAL…YALL), 135-155 (GLTV…LALI), 178-198 (LYVL…QGVI), 282-302 (FSNF…CLVF), 313-333 (VAVL…ETSA), 418-438 (GLYG…LMIG), 456-476 (VSIV…IAVL), 522-542 (WMTA…VLAI), and 565-585 (LFVV…YMPA).

Belongs to the KdpA family. In terms of assembly, the system is composed of three essential subunits: KdpA, KdpB and KdpC.

The protein resides in the cell inner membrane. Functionally, part of the high-affinity ATP-driven potassium transport (or Kdp) system, which catalyzes the hydrolysis of ATP coupled with the electrogenic transport of potassium into the cytoplasm. This subunit binds the periplasmic potassium ions and delivers the ions to the membrane domain of KdpB through an intramembrane tunnel. The polypeptide is Potassium-transporting ATPase potassium-binding subunit (Burkholderia pseudomallei (strain K96243)).